We begin with the raw amino-acid sequence, 441 residues long: Bacteria-responsive protein 1 (441 aa).

The N-terminal stretch at 1 to 18 is a signal peptide; that stretch reads MWFFKVGALLFLAALVSA. A glycan (N-linked (GlcNAc...) asparagine) is linked at N20. One can recognise a GH18 domain in the interval 25–441; that stretch reads PKVLCYYDGQ…PILRAAKYRL (417 aa). A disulfide bond links C29 and C56. N225 is a glycosylation site (N-linked (GlcNAc...) asparagine).

Belongs to the glycosyl hydrolase 18 family. IDGF subfamily. In terms of tissue distribution, salivary gland (at protein level).

Its subcellular location is the secreted. Functionally, promotes recruitment of host neutrophils at the bite site. Induces expression of IL1B and IL6 in the skin of the host. In terms of biological role, (Microbial infection) Enhances Zika virus replication and exacerbates disease pathogenesis in the host. The polypeptide is Bacteria-responsive protein 1 (Aedes aegypti (Yellowfever mosquito)).